We begin with the raw amino-acid sequence, 265 residues long: Uridylate kinase (265 aa).

The tract at residues 1-29 (MTESREPHVAGSAAPRPEPANGLASGQPS) is disordered. 40-43 (KLGG) provides a ligand contact to ATP. UMP is bound at residue glycine 81. 2 residues coordinate ATP: glycine 82 and arginine 86. UMP contacts are provided by residues aspartate 101 and 162 to 169 (MGLPYFST). Phenylalanine 195 and aspartate 198 together coordinate ATP.

Belongs to the UMP kinase family. Homohexamer.

It is found in the cytoplasm. It catalyses the reaction UMP + ATP = UDP + ADP. Its pathway is pyrimidine metabolism; CTP biosynthesis via de novo pathway; UDP from UMP (UMPK route): step 1/1. Inhibited by UTP. In terms of biological role, catalyzes the reversible phosphorylation of UMP to UDP. This Mycolicibacterium paratuberculosis (strain ATCC BAA-968 / K-10) (Mycobacterium paratuberculosis) protein is Uridylate kinase.